The chain runs to 151 residues: 3-hydroxyacyl-[acyl-carrier-protein] dehydratase FabZ (151 aa).

His56 is an active-site residue.

Belongs to the thioester dehydratase family. FabZ subfamily.

The protein resides in the cytoplasm. It carries out the reaction a (3R)-hydroxyacyl-[ACP] = a (2E)-enoyl-[ACP] + H2O. Functionally, involved in unsaturated fatty acids biosynthesis. Catalyzes the dehydration of short chain beta-hydroxyacyl-ACPs and long chain saturated and unsaturated beta-hydroxyacyl-ACPs. The chain is 3-hydroxyacyl-[acyl-carrier-protein] dehydratase FabZ from Rhodopseudomonas palustris (strain BisB18).